An 839-amino-acid chain; its full sequence is Autophagy-related protein 9A (839 aa).

Ala2 carries the N-acetylalanine modification. At 2–61 (AQFDTEYQRLEASYSDSPPGEEDLLVHVAEGSKSPWHHIENLDLFFSRVYNLHQKNGFTC) the chain is on the cytoplasmic side. A Tyrosine-based sorting signal motif is present at residues 8–11 (YQRL). A phosphoserine mark is found at Ser14, Ser16, and Ser18. The helical transmembrane segment at 62-84 (MLIGEMFELMQFLFVVAFTTFLV) threads the bilayer. Over 85-128 (SCVDYDILFANKMVNHSLHPTEPVKVTLPDAFLPAQVCSARIQE) the chain is Lumenal. N-linked (GlcNAc...) asparagine glycosylation is present at Asn99. Residues 129 to 154 (NGSLITILVIAGVFWIHRLIKFIYNI) form a helical membrane-spanning segment. Topologically, residues 155-290 (CCYWEIHSFY…ELAQRLSNRI (136 aa)) are cytoplasmic. Residues 291-301 (LWIGIANFLLC) lie within the membrane without spanning it. The Cytoplasmic segment spans residues 302–319 (PLILIWQILYAFFSYAEV). Residues 320 to 328 (LKREPGALG) lie within the membrane without spanning it. Over 329–371 (ARCWSLYGRCYLRHFNELEHELQSRLNRGYKPASKYMNCFLSP) the chain is Cytoplasmic. Residues 372–397 (LLTLLAKNGAFFAGSILAVLIALTIY) form a helical membrane-spanning segment. Topologically, residues 398–406 (DEDVLAVEH) are lumenal. Residues 407 to 424 (VLTTVTLLGVTVTVCRSF) traverse the membrane as a helical segment. Residues 425–470 (IPDQHMVFCPEQLLRVILAHIHYMPDHWQGNAHRSQTRDEFAQLFQ) are Cytoplasmic-facing. Residues 471 to 480 (YKAVFILEEL) lie within the membrane without spanning it. Residues 481–483 (LSP) lie on the Cytoplasmic side of the membrane. An intramembrane segment occupies 484–492 (IVTPLILIF). Residues 493–839 (CLRPRALEII…DELPPQVHKV (347 aa)) are Cytoplasmic-facing. Ser656 is modified (phosphoserine). Disordered stretches follow at residues 657-686 (PLQPGAAPQGRVPSTMTGSGVDARTASSGS) and 717-839 (HKQQ…VHKV). A compositionally biased stretch (basic and acidic residues) spans 724–736 (EPERHVWHRRESD). Ser735, Ser738, Ser741, and Ser828 each carry phosphoserine. Acidic residues-rich tracts occupy residues 737–747 (ESGESAPEEGG) and 823–832 (VPEEGSEDEL).

The protein belongs to the ATG9 family. In terms of assembly, homotrimer; forms a homotrimer with a central pore that forms a path between the two membrane leaflets. Interacts (via cytoplasmic its C-terminus) with ATG2A. Interacts with SUPT20H. Interacts (via the tyrosine-based sorting signal motif) with AP4M1; promoting association with the AP-4 complex. Interacts with ARFIP1 and ARFIP2. Interacts with ATG4A; the interaction is direct and promotes ATG9A trafficking. Ufmylated in a DDRGK1 dependent manner.

Its subcellular location is the preautophagosomal structure membrane. It is found in the cytoplasmic vesicle. The protein localises to the autophagosome membrane. The protein resides in the golgi apparatus. It localises to the trans-Golgi network membrane. Its subcellular location is the late endosome membrane. It is found in the recycling endosome membrane. The protein localises to the endoplasmic reticulum membrane. The protein resides in the mitochondrion membrane. The catalysed reaction is a 1,2-diacyl-sn-glycero-3-phosphocholine(in) = a 1,2-diacyl-sn-glycero-3-phosphocholine(out). It catalyses the reaction a 1,2-diacyl-sn-glycero-3-phospho-L-serine(in) = a 1,2-diacyl-sn-glycero-3-phospho-L-serine(out). It carries out the reaction a 1,2-diacyl-sn-glycero-3-phosphoethanolamine(in) = a 1,2-diacyl-sn-glycero-3-phosphoethanolamine(out). Phospholipid scramblase involved in autophagy by mediating autophagosomal membrane expansion. Cycles between the preautophagosomal structure/phagophore assembly site (PAS) and the cytoplasmic vesicle pool and supplies membrane for the growing autophagosome. Lipid scramblase activity plays a key role in preautophagosomal structure/phagophore assembly by distributing the phospholipids that arrive through ATG2 (ATG2A or ATG2B) from the cytoplasmic to the luminal leaflet of the bilayer, thereby driving autophagosomal membrane expansion. Also required to supply phosphatidylinositol 4-phosphate to the autophagosome initiation site by recruiting the phosphatidylinositol 4-kinase beta (PI4KB) in a process dependent on ARFIP2, but not ARFIP1. In addition to autophagy, also plays a role in necrotic cell death. The protein is Autophagy-related protein 9A of Mus musculus (Mouse).